Here is a 548-residue protein sequence, read N- to C-terminus: Fumarate hydratase class I, anaerobic (548 aa).

C105 contacts [4Fe-4S] cluster. The residue at position 192 (K192) is an N6-acetyllysine. Residues C224 and C318 each coordinate [4Fe-4S] cluster.

The protein belongs to the class-I fumarase family. In terms of assembly, homodimer. Requires [4Fe-4S] cluster as cofactor.

The catalysed reaction is (S)-malate = fumarate + H2O. It carries out the reaction (S,S)-tartrate = oxaloacetate + H2O. Catalyzes the reversible hydration of fumarate to (S)-malate. Functions in the generation of fumarate for use as an anaerobic electron acceptor. To a lesser extent, also displays D-tartrate dehydratase activity, but is not able to convert (R)-malate, L-tartrate or meso-tartrate. Is required for anaerobic growth on D-tartrate. In Escherichia coli (strain K12), this protein is Fumarate hydratase class I, anaerobic.